The chain runs to 119 residues: Beta-2-microglobulin (119 aa).

Positions 1-20 (MARFVAVALLVLLSLSGLEA) are cleaved as a signal peptide. An Ig-like C1-type domain is found at 25–114 (PKIQVYSRHP…VTFSTPKTVK (90 aa)). An intrachain disulfide couples Cys45 to Cys100.

This sequence belongs to the beta-2-microglobulin family. As to quaternary structure, heterodimer of an alpha chain and a beta chain. Beta-2-microglobulin is the beta-chain of major histocompatibility complex class I molecules.

It is found in the secreted. Its function is as follows. Component of the class I major histocompatibility complex (MHC). Involved in the presentation of peptide antigens to the immune system. The protein is Beta-2-microglobulin (B2M) of Plecturocebus moloch (Dusky titi monkey).